Reading from the N-terminus, the 205-residue chain is Regulator of G-protein signaling 4 (205 aa).

Residues cysteine 2, cysteine 12, and cysteine 95 are each lipidated (S-palmitoyl cysteine). One can recognise an RGS domain in the interval 62-178 (SLENLISHEC…LKSRFYLDLV (117 aa)).

Post-translationally, palmitoylated on Cys-2 and/or Cys-12. In terms of processing, phosphorylated by cyclic GMP-dependent protein kinase. In terms of tissue distribution, expressed in brain and heart. Expressed in brain at protein level. Expressed in prefontal and visual cortex. Isoform 4 and isoform 5 are expressed ubiquitously. Isoform 1, isoform 2 and isoform 3 are not expressed in the cerebellum.

Inhibits signal transduction by increasing the GTPase activity of G protein alpha subunits thereby driving them into their inactive GDP-bound form. Activity on G(z)-alpha is inhibited by phosphorylation of the G-protein. Activity on G(z)-alpha and G(i)-alpha-1 is inhibited by palmitoylation of the G-protein. The sequence is that of Regulator of G-protein signaling 4 (RGS4) from Homo sapiens (Human).